The sequence spans 356 residues: D-alanine--D-alanine ligase (356 aa).

Residues Lys134 to Asn339 enclose the ATP-grasp domain. Glu167–Glu222 contributes to the ATP binding site. Mg(2+) is bound by residues Asp293, Glu306, and Asn308.

It belongs to the D-alanine--D-alanine ligase family. Mg(2+) serves as cofactor. Requires Mn(2+) as cofactor.

It localises to the cytoplasm. It carries out the reaction 2 D-alanine + ATP = D-alanyl-D-alanine + ADP + phosphate + H(+). Its pathway is cell wall biogenesis; peptidoglycan biosynthesis. Its function is as follows. Cell wall formation. This Macrococcus caseolyticus (strain JCSC5402) (Macrococcoides caseolyticum) protein is D-alanine--D-alanine ligase.